A 369-amino-acid chain; its full sequence is MAAARLPSPAPVAHPPALRARPLAPHLYAALPRAPYPAWQEPLPLPEGGDHPVPPKKKIKVAPLLPERADQPVVTSNSATTTRPQLCAPYDDEIEATLRAMETNPAERPSPYFLETTQGGRMTALVRASMIAFMDEFSRFHELADGTLQRAAYFLDRYLSVTPESDDALQLRLVGATAVFLAAKYEDQYTLRKIDASMVAARRGYTSETRHKMVSIMETEMLAALGFNLGGPTAYTFVEHFTRYYGDGEEEELLKEAAHRFADGSLLTYGFHRYLPSIVAASSIFLARLDVLGHEPWSQDLAELTGYKAIDLMGCVCDMEEKSRRAAAQHHLESKPAGAAGVGINSSGDDHTRPIRPAHLYIVSCRCSW.

Residues 328–350 (AQHHLESKPAGAAGVGINSSGDD) are disordered.

The protein belongs to the cyclin family. Cyclin F subfamily.

In Oryza sativa subsp. japonica (Rice), this protein is Putative cyclin-F1-1 (CYCF1-1).